Reading from the N-terminus, the 1443-residue chain is ARF guanine-nucleotide exchange factor GNL1 (1443 aa).

The SEC7 domain maps to 554 to 743 (FVRKVKHIKK…SEIYHSIRHS (190 aa)). Glu658 is a catalytic residue. Disordered regions lie at residues 917–949 (DDPE…AMPR) and 1424–1443 (DQFQ…GNEV). A compositionally biased stretch (polar residues) spans 939–949 (VSQSQPSAMPR). Basic and acidic residues predominate over residues 1425 to 1435 (QFQRRNAKPED).

Homodimer.

The protein localises to the cytoplasm. The protein resides in the cytosol. Its subcellular location is the golgi apparatus membrane. In terms of biological role, activates the ARF proteins by exchanging bound GDP for free GTP. Plays a role in vesicular protein sorting. Acts as the major regulator of retrograde Golgi to endoplasmic reticulum trafficking but is also involved in the endocytosis process. Could function redundantly with GNOM. Regulates vesicle trafficking required for the coordinated polar localization of auxin efflux carriers which in turn determines the direction of auxin flow. Mediates the endocytosis of PIN2 from plasma membrane to endosomal compartments. Required for maintenance of endoplasmic reticulum morphology. This chain is ARF guanine-nucleotide exchange factor GNL1 (GNL1), found in Arabidopsis thaliana (Mouse-ear cress).